The chain runs to 391 residues: Ferrochelatase (391 aa).

The Fe cation site is built by His-196 and Glu-281.

Belongs to the ferrochelatase family.

It localises to the cytoplasm. It catalyses the reaction heme b + 2 H(+) = protoporphyrin IX + Fe(2+). The protein operates within porphyrin-containing compound metabolism; protoheme biosynthesis; protoheme from protoporphyrin-IX: step 1/1. Catalyzes the ferrous insertion into protoporphyrin IX. The sequence is that of Ferrochelatase from Prochlorococcus marinus (strain NATL1A).